Here is a 294-residue protein sequence, read N- to C-terminus: Syntaxin-19 (294 aa).

Residues Leu209–Ala271 enclose the t-SNARE coiled-coil homology domain.

The protein belongs to the syntaxin family. As to quaternary structure, interacts with EGFR.

It localises to the cell membrane. It is found in the cytoplasm. Its function is as follows. Plays a role in endosomal trafficking of the epidermal growth factor receptor (EGFR). The polypeptide is Syntaxin-19 (STX19) (Pongo abelii (Sumatran orangutan)).